The chain runs to 257 residues: MLAKRIIPCLDVKDGQVVKGVQFRNHEIIGDIVPLAQRYAEEGADELVFYDITASSDGRVVDKSWVARVAEVIDIPFCVAGGIKTAEDAAKILEFGADKVSINSPALANPELITELADKFGVQCIVVGIDSYFDKETGKYQVYQFTGDEERTKATKWETKDWVQEVQKRGAGEIVLNMMNQDGVRNGYDLEQLNMVREVCHVPLIASGGAGEMVHFADAYNKTNVDGALAASVFHKQIINIGELKDYLAEQDVEVRR.

Active-site residues include D11 and D130.

The protein belongs to the HisA/HisF family. Heterodimer of HisH and HisF.

The protein resides in the cytoplasm. The enzyme catalyses 5-[(5-phospho-1-deoxy-D-ribulos-1-ylimino)methylamino]-1-(5-phospho-beta-D-ribosyl)imidazole-4-carboxamide + L-glutamine = D-erythro-1-(imidazol-4-yl)glycerol 3-phosphate + 5-amino-1-(5-phospho-beta-D-ribosyl)imidazole-4-carboxamide + L-glutamate + H(+). It functions in the pathway amino-acid biosynthesis; L-histidine biosynthesis; L-histidine from 5-phospho-alpha-D-ribose 1-diphosphate: step 5/9. IGPS catalyzes the conversion of PRFAR and glutamine to IGP, AICAR and glutamate. The HisF subunit catalyzes the cyclization activity that produces IGP and AICAR from PRFAR using the ammonia provided by the HisH subunit. In Aliivibrio fischeri (strain MJ11) (Vibrio fischeri), this protein is Imidazole glycerol phosphate synthase subunit HisF.